Here is an 80-residue protein sequence, read N- to C-terminus: CLAVATA3/ESR (CLE)-related protein 14 (80 aa).

Residues 1-26 form the signal peptide; sequence MKVWSQRLSFLIVMIFILAGLHSSSA. A hydroxyproline mark is found at P71 and P74. P74 is a glycosylation site (O-linked (Ara...) hydroxyproline).

The protein belongs to the CLV3/ESR signal peptide family. In terms of assembly, interacts with the extracellular leucine-rich repeat region of CLV2 and PEPR2. Post-translationally, the O-glycosylation (arabinosylation) of the hydroxyproline Pro-74 enhances binding affinity of the CLE14p peptide for its receptor. In terms of tissue distribution, mostly expressed in roots, and, to a lower extent, in seedlings and leaves. Expressed in the primary root tip under Pi deficiency.

Its subcellular location is the secreted. The protein localises to the extracellular space. Functionally, extracellular signal peptide that regulates cell fate. Represses root apical meristem maintenance. Acts as an elicitor of the root meristem differentiation through the CLV2/CRN complex signaling pathway. Inhibits irreversibly root growth by reducing cell division rates in the root apical meristem. Regulates the transition of protophloem cells from proliferation to differentiation, thus impinging on postembryonic growth capacity of the root meristem; this signaling pathway requires CRN and CLV2. The polypeptide is CLAVATA3/ESR (CLE)-related protein 14 (Arabidopsis thaliana (Mouse-ear cress)).